Consider the following 432-residue polypeptide: Enolase (432 aa).

Glutamine 167 is a (2R)-2-phosphoglycerate binding site. The Proton donor role is filled by glutamate 209. The Mg(2+) site is built by aspartate 246, glutamate 290, and aspartate 317. (2R)-2-phosphoglycerate-binding residues include lysine 342, arginine 371, serine 372, and lysine 393. The active-site Proton acceptor is lysine 342.

It belongs to the enolase family. In terms of assembly, component of the RNA degradosome, a multiprotein complex involved in RNA processing and mRNA degradation. The cofactor is Mg(2+).

Its subcellular location is the cytoplasm. The protein resides in the secreted. The protein localises to the cell surface. The catalysed reaction is (2R)-2-phosphoglycerate = phosphoenolpyruvate + H2O. It participates in carbohydrate degradation; glycolysis; pyruvate from D-glyceraldehyde 3-phosphate: step 4/5. Catalyzes the reversible conversion of 2-phosphoglycerate (2-PG) into phosphoenolpyruvate (PEP). It is essential for the degradation of carbohydrates via glycolysis. In Salmonella agona (strain SL483), this protein is Enolase.